Consider the following 137-residue polypeptide: Cellular retinoic acid-binding protein 1 (137 aa).

Positions 21–31 match the Nuclear localization signal motif; sequence KALGVNAMLRK. 132–134 contacts all-trans-retinoate; it reads RIY.

The protein belongs to the calycin superfamily. Fatty-acid binding protein (FABP) family.

The protein resides in the cytoplasm. Its function is as follows. Cytosolic CRABPs may regulate the access of retinoic acid to the nuclear retinoic acid receptors. The sequence is that of Cellular retinoic acid-binding protein 1 (CRABP1) from Gallus gallus (Chicken).